Reading from the N-terminus, the 395-residue chain is NAD(P)H-quinone oxidoreductase subunit H (395 aa).

It belongs to the complex I 49 kDa subunit family. NDH-1 can be composed of about 15 different subunits; different subcomplexes with different compositions have been identified which probably have different functions.

It is found in the cellular thylakoid membrane. It catalyses the reaction a plastoquinone + NADH + (n+1) H(+)(in) = a plastoquinol + NAD(+) + n H(+)(out). The enzyme catalyses a plastoquinone + NADPH + (n+1) H(+)(in) = a plastoquinol + NADP(+) + n H(+)(out). Functionally, NDH-1 shuttles electrons from an unknown electron donor, via FMN and iron-sulfur (Fe-S) centers, to quinones in the respiratory and/or the photosynthetic chain. The immediate electron acceptor for the enzyme in this species is believed to be plastoquinone. Couples the redox reaction to proton translocation, and thus conserves the redox energy in a proton gradient. Cyanobacterial NDH-1 also plays a role in inorganic carbon-concentration. This chain is NAD(P)H-quinone oxidoreductase subunit H, found in Prochlorococcus marinus (strain MIT 9515).